Reading from the N-terminus, the 309-residue chain is NAD kinase (309 aa).

Catalysis depends on Asp-89, which acts as the Proton acceptor. Residues 89–90 (DG), 163–164 (NE), His-174, Arg-191, Asp-193, and 204–209 (TAYALS) each bind NAD(+).

This sequence belongs to the NAD kinase family. A divalent metal cation is required as a cofactor.

It localises to the cytoplasm. It carries out the reaction NAD(+) + ATP = ADP + NADP(+) + H(+). Functionally, involved in the regulation of the intracellular balance of NAD and NADP, and is a key enzyme in the biosynthesis of NADP. Catalyzes specifically the phosphorylation on 2'-hydroxyl of the adenosine moiety of NAD to yield NADP. This is NAD kinase from Shewanella sp. (strain MR-4).